Reading from the N-terminus, the 659-residue chain is Fructose-1,6-bisphosphatase class 3 (659 aa).

Belongs to the FBPase class 3 family. Mn(2+) serves as cofactor.

It carries out the reaction beta-D-fructose 1,6-bisphosphate + H2O = beta-D-fructose 6-phosphate + phosphate. Its pathway is carbohydrate biosynthesis; gluconeogenesis. The polypeptide is Fructose-1,6-bisphosphatase class 3 (Clostridium botulinum (strain Alaska E43 / Type E3)).